We begin with the raw amino-acid sequence, 486 residues long: tRNA sulfurtransferase (486 aa).

In terms of domain architecture, THUMP spans 63-167 (DAFAERLGCI…HEKLYMVVRR (105 aa)). ATP is bound by residues 185-186 (LI), Lys-267, Gly-289, and Gln-298. A disulfide bridge links Cys-346 with Cys-460. One can recognise a Rhodanese domain in the interval 408-486 (VDTQEVVIDI…GYTNVKVYRP (79 aa)). The active-site Cysteine persulfide intermediate is the Cys-460.

It belongs to the ThiI family.

The protein localises to the cytoplasm. The enzyme catalyses [ThiI sulfur-carrier protein]-S-sulfanyl-L-cysteine + a uridine in tRNA + 2 reduced [2Fe-2S]-[ferredoxin] + ATP + H(+) = [ThiI sulfur-carrier protein]-L-cysteine + a 4-thiouridine in tRNA + 2 oxidized [2Fe-2S]-[ferredoxin] + AMP + diphosphate. It carries out the reaction [ThiS sulfur-carrier protein]-C-terminal Gly-Gly-AMP + S-sulfanyl-L-cysteinyl-[cysteine desulfurase] + AH2 = [ThiS sulfur-carrier protein]-C-terminal-Gly-aminoethanethioate + L-cysteinyl-[cysteine desulfurase] + A + AMP + 2 H(+). Its pathway is cofactor biosynthesis; thiamine diphosphate biosynthesis. Catalyzes the ATP-dependent transfer of a sulfur to tRNA to produce 4-thiouridine in position 8 of tRNAs, which functions as a near-UV photosensor. Also catalyzes the transfer of sulfur to the sulfur carrier protein ThiS, forming ThiS-thiocarboxylate. This is a step in the synthesis of thiazole, in the thiamine biosynthesis pathway. The sulfur is donated as persulfide by IscS. The polypeptide is tRNA sulfurtransferase (Shewanella denitrificans (strain OS217 / ATCC BAA-1090 / DSM 15013)).